A 1183-amino-acid chain; its full sequence is PAN2-PAN3 deadenylation complex catalytic subunit PAN2 (1183 aa).

Positions 1-24 (MDGWTEISRIAATTQPPKGPSPHI) are disordered. WD repeat units lie at residues 159-207 (DLNK…SIKS), 269-309 (PFPA…NVFL), and 327-366 (SKAPFMTNLEISENGDFFAFSDSYATMHLWTLNNSGSTIT). A linker region spans residues 369 to 520 (FVNFPASIEQ…FQYKVPLSRK (152 aa)). The USP domain occupies 521 to 919 (KIPNCYSRLQ…KPVILVYHDS (399 aa)). Residues 977 to 1151 (IAIDAEFVNL…EDAYTALLLY (175 aa)) enclose the Exonuclease domain. Residues D980, E982, D1090, and D1143 each contribute to the a divalent metal cation site.

It belongs to the peptidase C19 family. PAN2 subfamily. In terms of assembly, forms a heterotrimer with an asymmetric homodimer of the regulatory subunit PAN3 to form the poly(A)-nuclease (PAN) deadenylation complex. The cofactor is a divalent metal cation.

Its subcellular location is the cytoplasm. The enzyme catalyses Exonucleolytic cleavage of poly(A) to 5'-AMP.. With respect to regulation, positively regulated by the regulatory subunit PAN3. Its function is as follows. Catalytic subunit of the poly(A)-nuclease (PAN) deadenylation complex, one of two cytoplasmic mRNA deadenylases involved in mRNA turnover. PAN specifically shortens poly(A) tails of RNA and the activity is stimulated by poly(A)-binding protein PAB1. PAN deadenylation is followed by rapid degradation of the shortened mRNA tails by the CCR4-NOT complex. Deadenylated mRNAs are then degraded by two alternative mechanisms, namely exosome-mediated 3'-5' exonucleolytic degradation, or deadenylation-dependent mRNA decaping and subsequent 5'-3' exonucleolytic degradation by XRN1. May also be involved in post-transcriptional maturation of mRNA poly(A) tails. This chain is PAN2-PAN3 deadenylation complex catalytic subunit PAN2, found in Scheffersomyces stipitis (strain ATCC 58785 / CBS 6054 / NBRC 10063 / NRRL Y-11545) (Yeast).